Here is a 959-residue protein sequence, read N- to C-terminus: Translation initiation factor IF-2 (959 aa).

The segment covering 1 to 10 (MSDKTNDDKT) has biased composition (basic and acidic residues). Residues 1–374 (MSDKTNDDKT…SQMQETREKI (374 aa)) are disordered. Residues 27–37 (EQSTVRQNFSH) are compositionally biased toward polar residues. 2 stretches are compositionally biased toward low complexity: residues 63–118 (AAAA…VTKP) and 128–138 (QRPGGQQAQRP). Basic and acidic residues-rich tracts occupy residues 154 to 225 (SEMD…EAAK) and 232 to 241 (ARSERRDDAR). Low complexity predominate over residues 246-284 (GARPQQAGRPQGGRPQPAGRPQQGSPRPAPIIADAAPIA). The segment covering 318–333 (PEVRAPKVVKGEDDRR) has biased composition (basic and acidic residues). One can recognise a tr-type G domain in the interval 457 to 626 (SRPPVVTIMG…LLQAEMLDLK (170 aa)). The tract at residues 466-473 (GHVDHGKT) is G1. 466 to 473 (GHVDHGKT) serves as a coordination point for GTP. The G2 stretch occupies residues 491-495 (GITQH). The segment at 512–515 (DTPG) is G3. Residues 512-516 (DTPGH) and 566-569 (NKID) each bind GTP. Residues 566–569 (NKID) form a G4 region. The segment at 602 to 604 (SAK) is G5.

It belongs to the TRAFAC class translation factor GTPase superfamily. Classic translation factor GTPase family. IF-2 subfamily.

The protein localises to the cytoplasm. Its function is as follows. One of the essential components for the initiation of protein synthesis. Protects formylmethionyl-tRNA from spontaneous hydrolysis and promotes its binding to the 30S ribosomal subunits. Also involved in the hydrolysis of GTP during the formation of the 70S ribosomal complex. The chain is Translation initiation factor IF-2 from Brucella abortus (strain 2308).